We begin with the raw amino-acid sequence, 1000 residues long: Chloride channel protein D (1000 aa).

2 stretches are compositionally biased toward low complexity: residues 1 to 16 (MSSGNPFDNGNPNDGN) and 38 to 60 (NNNNNNNNNNNNNNNNNNNNSSV). The tract at residues 1-90 (MSSGNPFDNG…SYDDDGDDEE (90 aa)) is disordered. At 1-256 (MSSGNPFDNG…LASDHEVLRW (256 aa)) the chain is on the cytoplasmic side. The segment covering 71 to 80 (RIQEEERLTE) has biased composition (basic and acidic residues). 10 helical membrane-spanning segments follow: residues 257 to 277 (IVSLFMGIFIGVIAYFSHACV), 290 to 310 (AVLELDLFLAFLTYFLLNTLL), 416 to 436 (GAGAGVAAAFSAPLGGTLFSL), 442 to 462 (FWSIALTWRAFFCCMVATYTM), 493 to 513 (IIPFLLIGVLGGLGGALFTWI), 534 to 554 (LEVFLIIGLSTCIQFFLPLFF), 678 to 698 (LGLWPMFLFCIFYLFFAAYTA), 710 to 730 (MLVIGASYGRFVGLVVYHILG), 733 to 753 (VSIDPGIYAVMGAAAFMGGVS), and 772 to 792 (YLLPLMLTVMTAKWVADALIH). CBS domains are found at residues 824 to 881 (MAKK…ISDV) and 926 to 984 (MNLT…YREL).

It belongs to the chloride channel (TC 2.A.49) family.

The protein localises to the membrane. In terms of biological role, voltage-gated chloride channel. Chloride channels may have several functions including the regulation of cell volume, membrane potential stabilization and signal transduction. Required for normal aggregation. This chain is Chloride channel protein D (clcD), found in Dictyostelium discoideum (Social amoeba).